Reading from the N-terminus, the 226-residue chain is Potassium/proton antiporter CemA (226 aa).

3 helical membrane-spanning segments follow: residues 7 to 27, 111 to 131, and 186 to 206; these read FTSL…SLSF, IICF…LFIL, and IISG…KYWI.

It belongs to the CemA family.

The protein localises to the plastid. The protein resides in the chloroplast inner membrane. It catalyses the reaction K(+)(in) + H(+)(out) = K(+)(out) + H(+)(in). Contributes to K(+)/H(+) antiport activity by supporting proton efflux to control proton extrusion and homeostasis in chloroplasts in a light-dependent manner to modulate photosynthesis. Prevents excessive induction of non-photochemical quenching (NPQ) under continuous-light conditions. Indirectly promotes efficient inorganic carbon uptake into chloroplasts. In Buxus microphylla (Littleleaf boxwood), this protein is Potassium/proton antiporter CemA.